The primary structure comprises 95 residues: MEIDDIFASKKANPANEKSNDSKSEAKAPKKGAKTKSTPSRPKPTNNQDDLFLDPKGASGRKRTEEGFLVYDEEELNIGQGGGTPDCPFDCQCCF.

Positions 1–64 (MEIDDIFASK…PKGASGRKRT (64 aa)) are disordered. Over residues 18-28 (KSNDSKSEAKA) the composition is skewed to basic and acidic residues. Residues 35–49 (TKSTPSRPKPTNNQD) are compositionally biased toward polar residues.

This is an uncharacterized protein from Schizosaccharomyces pombe (strain 972 / ATCC 24843) (Fission yeast).